Here is a 445-residue protein sequence, read N- to C-terminus: E3 ubiquitin-protein ligase pellino homolog 3 (445 aa).

The segment at 1-24 is disordered; it reads MVLEGNPDVGSPRTSDLQHPGSQG. S11 is modified (phosphoserine). Residues 12-24 are compositionally biased toward polar residues; sequence PRTSDLQHPGSQG.

It belongs to the pellino family. In terms of assembly, interacts with TRAF6, MAP3K14 and MAP3K7. Post-translationally, phosphorylated by IRAK1 enhancing its E3 ligase activity.

The enzyme catalyses S-ubiquitinyl-[E2 ubiquitin-conjugating enzyme]-L-cysteine + [acceptor protein]-L-lysine = [E2 ubiquitin-conjugating enzyme]-L-cysteine + N(6)-ubiquitinyl-[acceptor protein]-L-lysine.. The protein operates within protein modification; protein ubiquitination. Its function is as follows. E3 ubiquitin ligase catalyzing the covalent attachment of ubiquitin moieties onto substrate proteins. Involved in the TLR and IL-1 signaling pathways via interaction with the complex containing IRAK kinases and TRAF6. Mediates 'Lys-63'-linked polyubiquitination of IRAK1. Can activate AP1/JUN and ELK1. Acts as a regulator of innate immunity by mediating 'Lys-63'-linked polyubiquitination of RIPK2 downstream of NOD1 and NOD2, thereby transforming RIPK2 into a scaffolding protein for downstream effectors, ultimately leading to activation of the NF-kappa-B and MAP kinases signaling. Catalyzes 'Lys-63'-linked polyubiquitination of RIPK2 in parallel of XIAP. This Mus musculus (Mouse) protein is E3 ubiquitin-protein ligase pellino homolog 3.